Reading from the N-terminus, the 289-residue chain is Lipoyl synthase 2 (289 aa).

[4Fe-4S] cluster-binding residues include cysteine 43, cysteine 48, cysteine 54, cysteine 69, cysteine 73, cysteine 76, and serine 282. A Radical SAM core domain is found at 55–271 (YAQKTATFLL…GAVARDLGFA (217 aa)).

This sequence belongs to the radical SAM superfamily. Lipoyl synthase family. The cofactor is [4Fe-4S] cluster.

The protein resides in the cytoplasm. The enzyme catalyses [[Fe-S] cluster scaffold protein carrying a second [4Fe-4S](2+) cluster] + N(6)-octanoyl-L-lysyl-[protein] + 2 oxidized [2Fe-2S]-[ferredoxin] + 2 S-adenosyl-L-methionine + 4 H(+) = [[Fe-S] cluster scaffold protein] + N(6)-[(R)-dihydrolipoyl]-L-lysyl-[protein] + 4 Fe(3+) + 2 hydrogen sulfide + 2 5'-deoxyadenosine + 2 L-methionine + 2 reduced [2Fe-2S]-[ferredoxin]. It participates in protein modification; protein lipoylation via endogenous pathway; protein N(6)-(lipoyl)lysine from octanoyl-[acyl-carrier-protein]: step 2/2. Catalyzes the radical-mediated insertion of two sulfur atoms into the C-6 and C-8 positions of the octanoyl moiety bound to the lipoyl domains of lipoate-dependent enzymes, thereby converting the octanoylated domains into lipoylated derivatives. This chain is Lipoyl synthase 2, found in Gloeobacter violaceus (strain ATCC 29082 / PCC 7421).